The sequence spans 664 residues: Intraflagellar transport protein 70A1 (664 aa).

TPR repeat units lie at residues 11 to 44 (DGEFTAVVYRLIRDSRYSEAVQLLSAELQRSSRS), 45 to 78 (RAGLSLLAYCYYRLQEFELAAECYEQLSQMHPEL), 153 to 186 (PDGLVNMGCLLYKEGHYEAACSKFLAALQASGYQ), 188 to 220 (DLSYNLALAYYSSRQYAPALKHIADIIERGIRQ), 393 to 423 (TKQVQEARHNRDDEIIKKAMNEYDETLEKYI), 424 to 456 (PVLMAQAKIYWNLENYPMVEKIFRKSVEFCNDH), and 458 to 491 (VWKLNVAHVLFMQENKYKEAIGFYEPIVKKNYDN). The stretch at 507-534 (YIMTSQNEEAEELMRKIEKEEEQLSYGD) forms a coiled coil. A TPR 8 repeat occupies 543–576 (CIVNLVIGTLYCAKGNYDFGISRVIKSLEPYHKK).

This sequence belongs to the TTC30/dfy-1/fleer family. As to quaternary structure, interacts wit the IFT B complex component IFT52.

It is found in the cell projection. It localises to the cilium. Its function is as follows. Required for polyglutamylation of axonemal tubulin. Plays a role in anterograde intraflagellar transport (IFT), the process by which cilia precursors are transported from the base of the cilium to the site of their incorporation at the tip. The sequence is that of Intraflagellar transport protein 70A1 (Ift70a1) from Mus musculus (Mouse).